The chain runs to 161 residues: Interleukin-17F (161 aa).

Residues 1 to 28 form the signal peptide; the sequence is MKCTRETAMVKSLLLLMLGLAILREVAA. N-linked (GlcNAc...) asparagine glycosylation occurs at Asn83. 2 cysteine pairs are disulfide-bonded: Cys100–Cys150 and Cys105–Cys152.

This sequence belongs to the IL-17 family. As to quaternary structure, homodimer; disulfide-linked. Heterodimer with IL17A (IL17A-IL17F). Forms complexes with IL17RA and IL17RC receptors with 2:1 binding stoichiometry: two receptor chains for one interleukin molecule. IL17F homodimer forms predominantly complexes with IL17RC homodimer, whereas IL17A-IL17F favors complexes with IL17RA-IL17RC. IL17RA and IL17RC chains cannot distinguish between IL17A and IL17F molecules, potentially enabling the formation of topologically distinct complexes. In terms of tissue distribution, expressed by T-helper 17 cells (Th17) (at protein level). The expression pattern reflects the differentiation state. In fully differentiated Th17 cells, IL17A-IL17F heterodimers are produced at higher levels than IL17A-IL17A and IL17F-IL17F dimers. Dominantly secreted in intestine. Expressed by resident cells of the lamina propria, both epithelial cells and immune cell subsets including natural killer cells, dendritic cells, macrophages and various T and B cell subsets. Expressed by epithelial cells and innate immune cells in the colon. Expressed in group 3 innate lymphoid cells.

Its subcellular location is the secreted. Its function is as follows. Effector cytokine of innate and adaptive immune system involved in antimicrobial host defense and maintenance of tissue integrity. IL17A-IL17F signals via IL17RA-IL17RC heterodimeric receptor complex, triggering homotypic interaction of IL17RA and IL17RC chains with TRAF3IP2 adapter through SEFIR domains. This leads to downstream TRAF6-mediated activation of NF-kappa-B and MAPkinase pathways ultimately resulting in transcriptional activation of cytokines, chemokines, antimicrobial peptides and matrix metalloproteinases, with potential strong immune inflammation. IL17A-IL17F is primarily involved in host defense against extracellular bacteria and fungi by inducing neutrophilic inflammation. As signature effector cytokine of T-helper 17 cells (Th17), primarily induces neutrophil activation and recruitment at infection and inflammatory sites. Stimulates the production of antimicrobial beta-defensins DEFB1, DEFB103A, and DEFB104A by mucosal epithelial cells, limiting the entry of microbes through the epithelial barriers. IL17F homodimer can signal via IL17RC homodimeric receptor complex, triggering downstream activation of TRAF6 and NF-kappa-B signaling pathway. Via IL17RC induces transcriptional activation of IL33, a potent cytokine that stimulates group 2 innate lymphoid cells and adaptive T-helper 2 cells involved in pulmonary allergic response to fungi. Likely via IL17RC, promotes sympathetic innervation of peripheral organs by coordinating the communication between gamma-delta T cells and parenchymal cells. Stimulates sympathetic innervation of thermogenic adipose tissue by driving TGFB1 expression. Regulates the composition of intestinal microbiota and immune tolerance by inducing antimicrobial proteins that specifically control the growth of commensal Firmicutes and Bacteroidetes. This is Interleukin-17F (Il17f) from Mus musculus (Mouse).